Consider the following 65-residue polypeptide: Small ribosomal subunit protein bS21 (65 aa).

Belongs to the bacterial ribosomal protein bS21 family.

In Geobacter sp. (strain M21), this protein is Small ribosomal subunit protein bS21.